Consider the following 453-residue polypeptide: F-box protein At4g27050 (453 aa).

Positions 3-51 constitute an F-box domain; the sequence is TDLISNLPDDVLGKILSLVPTKLAAATSVLSKRWRNLLPLVDSLDFDET.

As to quaternary structure, part of a SCF (ASK-cullin-F-box) protein ligase complex.

It functions in the pathway protein modification; protein ubiquitination. Component of SCF(ASK-cullin-F-box) E3 ubiquitin ligase complexes, which may mediate the ubiquitination and subsequent proteasomal degradation of target proteins. The polypeptide is F-box protein At4g27050 (Arabidopsis thaliana (Mouse-ear cress)).